Reading from the N-terminus, the 483-residue chain is Altronate oxidoreductase (483 aa).

An NAD(+)-binding site is contributed by 18-29 (IIQFGEGNFLRA).

The protein belongs to the mannitol dehydrogenase family. UxaB subfamily.

The catalysed reaction is D-altronate + NAD(+) = keto-D-tagaturonate + NADH + H(+). The protein operates within carbohydrate metabolism; pentose and glucuronate interconversion. This Cronobacter sakazakii (strain ATCC BAA-894) (Enterobacter sakazakii) protein is Altronate oxidoreductase.